The sequence spans 499 residues: Trichoplein keratin filament-binding protein (499 aa).

The stretch at 12–38 (SRVRTLEQQLVRQREQEARLRRQWEQH) forms a coiled coil. Disordered stretches follow at residues 46–78 (DVRS…EEKQ) and 169–209 (VQQQ…EEEN). Positions 50–67 (SKQAQWSSRQSFHRSMSA) are enriched in polar residues. 2 stretches are compositionally biased toward basic and acidic residues: residues 69 to 78 (QRDRMREEKQ) and 172 to 209 (QEKK…EEEN). 3 coiled-coil regions span residues 71-133 (DRMR…ERRK), 168-306 (QVQQ…ALLE), and 359-484 (WEKR…MIRQ). Residues 74 to 499 (REEKQRKLEE…IHSRPRSAWT (426 aa)) form an interaction with keratin proteins region. Positions 260-426 (KMMEESRRKT…RLTLRLEKEQ (167 aa)) are trichohyalin/plectin homology domain.

It belongs to the TCHP family.

The protein resides in the cytoplasm. It localises to the cytoskeleton. The protein localises to the microtubule organizing center. It is found in the centrosome. Its function is as follows. May act as a 'capping' or 'branching' protein for keratin filaments in the cell periphery. May regulate K8/K18 filament and desmosome organization mainly at the apical or peripheral regions of simple epithelial cells. The chain is Trichoplein keratin filament-binding protein from Danio rerio (Zebrafish).